The sequence spans 330 residues: Adenylate isopentenyltransferase 8, chloroplastic (330 aa).

The N-terminal 35 residues, 1 to 35, are a transit peptide targeting the chloroplast; sequence MQNLTSTFVSPSMIPITSPRLRLPPPRSVVPMTTV. 50-57 provides a ligand contact to ATP; the sequence is GATGSGKS.

It belongs to the IPP transferase family. As to expression, expressed in roots and in immature seeds with highest expression in the chalazal endosperm.

The protein localises to the plastid. It is found in the chloroplast. It catalyses the reaction dimethylallyl diphosphate + ADP = N(6)-(dimethylallyl)adenosine 5'-diphosphate + diphosphate. It carries out the reaction dimethylallyl diphosphate + ATP = N(6)-(dimethylallyl)adenosine 5'-triphosphate + diphosphate. In terms of biological role, involved in cytokinin biosynthesis. Catalyzes the transfer of an isopentenyl group from dimethylallyl diphosphate (DMAPP) to ATP and ADP. The protein is Adenylate isopentenyltransferase 8, chloroplastic (IPT8) of Arabidopsis thaliana (Mouse-ear cress).